The sequence spans 395 residues: ADP-ribosylation factor-like protein 13A (395 aa).

GTP-binding positions include 28–35, 71–75, and 130–133; these read GLDNSGKS, DLTGD, and NKQD.

Belongs to the small GTPase superfamily. Arf family.

In Rattus norvegicus (Rat), this protein is ADP-ribosylation factor-like protein 13A (Arl13a).